The following is a 125-amino-acid chain: Small ribosomal subunit protein uS12c (125 aa).

The interval 104 to 125 is disordered; sequence ASGVKDRKQGRSKYGGKRPKGD. Basic residues predominate over residues 113–125; that stretch reads GRSKYGGKRPKGD.

This sequence belongs to the universal ribosomal protein uS12 family. Part of the 30S ribosomal subunit.

The protein localises to the plastid. Its subcellular location is the chloroplast. Its function is as follows. With S4 and S5 plays an important role in translational accuracy. Located at the interface of the 30S and 50S subunits. In Emiliania huxleyi (Coccolithophore), this protein is Small ribosomal subunit protein uS12c (rps12).